Here is a 285-residue protein sequence, read N- to C-terminus: MINKTLLQKRFNRAAVSYDQYANVQKKMARHLLSQLEKRYSKAAAIRILELGCGTGYITEKLVHLFPNAQITAIDFAESMIAVAKQRRHVDEVTFRCEDIEKLILDDFYDVIISNATFQWLNDLQVSLVKLYKHLAGEGILLFSTFGNRTFQELHRAFERAKEEKNIKSHVSIGQRLFTKAQLQNICSIKKGNVHVSETCYIEKFTHVRDFFKSIRKVGATNSNEDTYCQSPSLFRAMLRIYERDFTKEGEIIATYHALFAHIEKEGKRRNETNTNKSRLEENCV.

This sequence belongs to the methyltransferase superfamily.

The enzyme catalyses malonyl-[ACP] + S-adenosyl-L-methionine = malonyl-[ACP] methyl ester + S-adenosyl-L-homocysteine. It participates in cofactor biosynthesis; biotin biosynthesis. Its function is as follows. Converts the free carboxyl group of a malonyl-thioester to its methyl ester by transfer of a methyl group from S-adenosyl-L-methionine (SAM). It allows to synthesize pimeloyl-ACP via the fatty acid synthetic pathway. The sequence is that of Malonyl-[acyl-carrier protein] O-methyltransferase from Bacillus cytotoxicus (strain DSM 22905 / CIP 110041 / 391-98 / NVH 391-98).